The chain runs to 141 residues: uncharacterized protein (141 aa).

2 helical membrane-spanning segments follow: residues 64–84 (IAAVGLAVSGPGVLYKVIEAI) and 112–132 (IVGSGAAFVTALGVAAFLVLI).

It localises to the cell membrane. This is an uncharacterized protein from Sinorhizobium fredii (strain NBRC 101917 / NGR234).